A 303-amino-acid polypeptide reads, in one-letter code: Lysosomal amino acid transporter 1 homolog (303 aa).

At 1–38 (MAEGLRAPPPPGNGSECPDGARWVLRLLGECARDGRDV) the chain is on the lumenal side. Asn-13 is a glycosylation site (N-linked (GlcNAc...) asparagine). In terms of domain architecture, PQ-loop 1 spans 36–102 (RDVGSALLGL…LANQLPLQVY (67 aa)). The chain crosses the membrane as a helical span at residues 39–59 (GSALLGLLSIGCFAAAALPQF). The Cytoplasmic portion of the chain corresponds to 60–73 (YQACKTGIMDRALS). Residues 74 to 94 (IYFLLGWLGGDLLNLIGSFLA) form a helical membrane-spanning segment. Topologically, residues 95–96 (NQ) are lumenal. The chain crosses the membrane as a helical span at residues 97–117 (LPLQVYTAVYYVLADLVMLSL). Over 118–131 (YGYYKAKNWGTGAT) the chain is Cytoplasmic. A helical transmembrane segment spans residues 132–152 (ASINAACLFCLLGTATTLTVL). Over 153-182 (SHDTGPAPNPAAFGGRSLLSLGLEGPGPEP) the chain is Lumenal. The helical transmembrane segment at 183-203 (ISKTEIIGFAIGSISSVLYLC) threads the bilayer. The 66-residue stretch at 186–251 (TEIIGFAIGS…LKNPEPGQSE (66 aa)) folds into the PQ-loop 2 domain. Residues 204 to 220 (SRLPQIYTNYRRKSTAG) are Cytoplasmic-facing. Residues 221–241 (VSFLLFALVMLGNLLYGTSVL) traverse the membrane as a helical segment. Over 242-260 (LKNPEPGQSEGDYILHHLP) the chain is Lumenal. Residues 261–281 (WLIGSLGVLSLDVIISFQFLA) form a helical membrane-spanning segment. Over 282-303 (YRTGQPSAGEEREALLAEHGDS) the chain is Cytoplasmic. Residues 296-297 (LL) carry the Di-leucine motif motif.

The protein belongs to the laat-1 family.

It is found in the lysosome membrane. In terms of biological role, amino acid transporter that specifically mediates the pH-dependent export of the cationic amino acids arginine, histidine and lysine from lysosomes. The polypeptide is Lysosomal amino acid transporter 1 homolog (SLC66A1) (Gallus gallus (Chicken)).